Reading from the N-terminus, the 1299-residue chain is GRB10-interacting GYF protein 2 (1299 aa).

Ala-2 carries the N-acetylalanine modification. Ser-19, Ser-26, and Ser-30 each carry phosphoserine. The 4EHP-binding motif signature appears at 40 to 50 (DYRYGREEMLA). Omega-N-methylarginine occurs at positions 107, 118, and 120. The disordered stretch occupies residues 112–131 (TVVGAPRGRSSSRGRGRGRG). At Ser-139 the chain carries Phosphoserine. 3 disordered regions span residues 147 to 195 (FGRG…RKHE), 214 to 247 (EDEDGGWRLAGSRRDGERWRPHSPDGPRSAGWRE), and 266 to 433 (RGYR…VADV). Position 149 is an omega-N-methylarginine (Arg-149). The span at 151-182 (GGREMHRSQSWEERGDRRFEKPGRKDVGRPNF) shows a compositional bias: basic and acidic residues. Residues Ser-160, Ser-189, and Ser-236 each carry the phosphoserine modification. A compositionally biased stretch (basic and acidic residues) spans 225 to 247 (SRRDGERWRPHSPDGPRSAGWRE). The DDX6 binding motif signature appears at 280-310 (DDRDSLPEWCLEDAEEEMGTFDSSGAFLSLK). The segment covering 289-298 (CLEDAEEEMG) has biased composition (acidic residues). Basic and acidic residues-rich tracts occupy residues 312 to 329 (VQKEPIPEEQEMDFRPVD) and 338 to 363 (EGSHNEEAKEPDKTNKKEGEKTDRVG). Positions 369 to 392 (ETPQTSSSSARPGTPSDHQSQEAS) are enriched in polar residues. A Phosphothreonine modification is found at Thr-382. A Phosphoserine modification is found at Ser-388. Residues 393 to 414 (QFERKDEPKTEQTEKAEEETRM) are compositionally biased toward basic and acidic residues. The GYF domain maps to 533–581 (MQKWYYKDPQGEIQGPFNNQEMAEWFQAGYFTMSLLVKRACDESFQPLG). The required for GRB10-binding stretch occupies residues 547 to 563 (GPFNNQEMAEWFQAGYF). Ser-593 is subject to Phosphoserine. Disordered stretches follow at residues 733–793 (KAAK…QEEA), 845–866 (EEAAKWAREEEEAQRRLEENRL), 872–891 (AARLRHEEEERKRKELEVQR), 917–936 (QLAQMKLPSSSTWGQQSNTT), 957–997 (ERQL…KPSG), 1009–1048 (EARQMQKQQQQQQQHQQPNRARNNTHSNLHTSIGNSVWGS), and 1084–1112 (KEVGPRNSTNKNKNNASLSKSVGVSNRQN). The interval 860-919 (RLEENRLRMEEEAARLRHEEEERKRKELEVQRQKELMRQRQQQQEALRRLQQQQQQQQLA) is required for interaction with SARS-CoV-2 non-structural protein 2 (nsp2). Residues 924–936 (PSSSTWGQQSNTT) show a composition bias toward polar residues. Residues 957–972 (ERQLREEQRRQQRELM) show a composition bias toward basic and acidic residues. Phosphoserine is present on Ser-993. The span at 1013–1025 (MQKQQQQQQQHQQ) shows a compositional bias: low complexity. Residues 1026–1048 (PNRARNNTHSNLHTSIGNSVWGS) show a composition bias toward polar residues. A compositionally biased stretch (low complexity) spans 1090–1104 (NSTNKNKNNASLSKS). Lys-1123 is covalently cross-linked (Glycyl lysine isopeptide (Lys-Gly) (interchain with G-Cter in SUMO2)). Disordered stretches follow at residues 1195–1230 (RAKQKANQQRQQQQLPQQQQQQPPQQPPQQPQQQDS) and 1247–1271 (QSNNQQSNFEAVQSGKKKKKQKMVR). The segment covering 1202–1217 (QQRQQQQLPQQQQQQP) has biased composition (low complexity). A Phosphoserine modification is found at Ser-1284.

Belongs to the GIGYF family. In terms of assembly, component of the 4EHP-GYF2 complex, at least composed of EIF4E2, GIGYF2 and ZNF598. Interacts (via the 4EHP-binding motif) with EIF4E2; the interaction is direct. Interacts with ZFP36/TTP (via P-P-P-P-G repeats); the interaction is direct. Interacts with GRB10. Interacts (via DDX6 motif) with DDX6 (via RecA-like domain 2). (Microbial infection) Interacts with SARS coronavirus-2/SARS-CoV-2 non-structural protein 2 (nsp2); the interaction enhances GIGYF2 binding to EIF4E2.

Key component of the 4EHP-GYF2 complex, a multiprotein complex that acts as a repressor of translation initiation. In the 4EHP-GYF2 complex, acts as a factor that bridges EIF4E2 to ZFP36/TTP, linking translation repression with mRNA decay. Also recruits and bridges the association of the 4EHP complex with the decapping effector protein DDX6, which is required for the ZFP36/TTP-mediated down-regulation of AU-rich mRNA. May act cooperatively with GRB10 to regulate tyrosine kinase receptor signaling, including IGF1 and insulin receptors. In association with EIF4E2, assists ribosome-associated quality control (RQC) by sequestering the mRNA cap, blocking ribosome initiation and decreasing the translational load on problematic messages. Part of a pathway that works in parallel to RQC-mediated degradation of the stalled nascent polypeptide. GIGYF2 and EIF4E2 work downstream and independently of ZNF598, which seems to work as a scaffold that can recruit them to faulty mRNA even if alternative recruitment mechanisms may exist. Functionally, (Microbial infection) Upon SARS coronavirus-2/SARS-CoV-2 infection, the interaction with non-structural protein 2 (nsp2) enhances GIGYF2 binding to EIF4E2 and increases repression of translation initiation of genes involved in antiviral innate immune response such as IFNB1. This chain is GRB10-interacting GYF protein 2, found in Homo sapiens (Human).